The following is a 297-amino-acid chain: Trans-enoyl reductase TOXD (297 aa).

NADP(+) is bound by residues Ser162–Thr165 and Tyr203.

The protein belongs to the zinc-containing alcohol dehydrogenase family. As to quaternary structure, monomer.

Its function is as follows. Trans-enoyl reductase; part of the diffuse TOX2 gene cluster that mediates the biosynthesis of the HC-toxin, cyclic tetrapeptide of structure cyclo(D-Pro-L-Ala-D-Ala-L-Aeo), where Aeo stands for 2-amino-9,10-epoxi-8-oxodecanoic acid. HC-toxin is a determinant of specificity and virulence in the interaction between the producing fungus and its host, maize. TOXD does not seem to play a role in HC-toxin biosynthesis. The chain is Trans-enoyl reductase TOXD from Cochliobolus carbonum (Maize leaf spot fungus).